A 31-amino-acid chain; its full sequence is MLTLTSYFGFLLAALTITSALFIGLSKIRLI.

The helical transmembrane segment at 4 to 26 threads the bilayer; that stretch reads LTSYFGFLLAALTITSALFIGLS.

It belongs to the PetL family. In terms of assembly, the 4 large subunits of the cytochrome b6-f complex are cytochrome b6, subunit IV (17 kDa polypeptide, PetD), cytochrome f and the Rieske protein, while the 4 small subunits are PetG, PetL, PetM and PetN. The complex functions as a dimer.

It is found in the plastid. Its subcellular location is the chloroplast thylakoid membrane. In terms of biological role, component of the cytochrome b6-f complex, which mediates electron transfer between photosystem II (PSII) and photosystem I (PSI), cyclic electron flow around PSI, and state transitions. PetL is important for photoautotrophic growth as well as for electron transfer efficiency and stability of the cytochrome b6-f complex. This chain is Cytochrome b6-f complex subunit 6, found in Aethionema grandiflorum (Persian stone-cress).